We begin with the raw amino-acid sequence, 224 residues long: ATP-dependent dethiobiotin synthetase BioD (224 aa).

12–17 (EVGKTV) provides a ligand contact to ATP. Thr-16 serves as a coordination point for Mg(2+). Lys-34 is a catalytic residue. Position 38 (Thr-38) interacts with substrate. ATP is bound by residues Asp-47, 106-109 (EGAG), 166-167 (GS), and 196-198 (PEG). 2 residues coordinate Mg(2+): Asp-47 and Glu-106.

This sequence belongs to the dethiobiotin synthetase family. In terms of assembly, homodimer. The cofactor is Mg(2+).

Its subcellular location is the cytoplasm. The catalysed reaction is (7R,8S)-7,8-diammoniononanoate + CO2 + ATP = (4R,5S)-dethiobiotin + ADP + phosphate + 3 H(+). Its pathway is cofactor biosynthesis; biotin biosynthesis; biotin from 7,8-diaminononanoate: step 1/2. Functionally, catalyzes a mechanistically unusual reaction, the ATP-dependent insertion of CO2 between the N7 and N8 nitrogen atoms of 7,8-diaminopelargonic acid (DAPA, also called 7,8-diammoniononanoate) to form a ureido ring. The chain is ATP-dependent dethiobiotin synthetase BioD from Saccharopolyspora erythraea (strain ATCC 11635 / DSM 40517 / JCM 4748 / NBRC 13426 / NCIMB 8594 / NRRL 2338).